Here is a 138-residue protein sequence, read N- to C-terminus: Small ribosomal subunit protein uS11c (138 aa).

A disordered region spans residues 1 to 23 (MAKPILRIGSRKNTRSGSRKNVR). The span at 9-23 (GSRKNTRSGSRKNVR) shows a compositional bias: basic residues.

The protein belongs to the universal ribosomal protein uS11 family. As to quaternary structure, part of the 30S ribosomal subunit.

It localises to the plastid. Its subcellular location is the chloroplast. The sequence is that of Small ribosomal subunit protein uS11c from Aethionema grandiflorum (Persian stone-cress).